Consider the following 183-residue polypeptide: Large ribosomal subunit protein uL6 (183 aa).

This sequence belongs to the universal ribosomal protein uL6 family. As to quaternary structure, part of the 50S ribosomal subunit.

Functionally, this protein binds to the 23S rRNA, and is important in its secondary structure. It is located near the subunit interface in the base of the L7/L12 stalk, and near the tRNA binding site of the peptidyltransferase center. The protein is Large ribosomal subunit protein uL6 of Parabacteroides distasonis (strain ATCC 8503 / DSM 20701 / CIP 104284 / JCM 5825 / NCTC 11152).